We begin with the raw amino-acid sequence, 181 residues long: Large ribosomal subunit protein uL5 (181 aa).

This sequence belongs to the universal ribosomal protein uL5 family. Part of the 50S ribosomal subunit; part of the 5S rRNA/L5/L18/L25 subcomplex. Contacts the 5S rRNA and the P site tRNA. Forms a bridge to the 30S subunit in the 70S ribosome.

Its function is as follows. This is one of the proteins that bind and probably mediate the attachment of the 5S RNA into the large ribosomal subunit, where it forms part of the central protuberance. In the 70S ribosome it contacts protein S13 of the 30S subunit (bridge B1b), connecting the 2 subunits; this bridge is implicated in subunit movement. Contacts the P site tRNA; the 5S rRNA and some of its associated proteins might help stabilize positioning of ribosome-bound tRNAs. This is Large ribosomal subunit protein uL5 from Acaryochloris marina (strain MBIC 11017).